The primary structure comprises 329 residues: DNA-directed RNA polymerase subunit alpha (329 aa).

The alpha N-terminal domain (alpha-NTD) stretch occupies residues 1–235; the sequence is MVREKVKVST…DLFIPFLHTE (235 aa). Residues 269-329 form an alpha C-terminal domain (alpha-CTD) region; it reads IALKYIFIDQ…KQILGILEKK (61 aa).

Belongs to the RNA polymerase alpha chain family. As to quaternary structure, in plastids the minimal PEP RNA polymerase catalytic core is composed of four subunits: alpha, beta, beta', and beta''. When a (nuclear-encoded) sigma factor is associated with the core the holoenzyme is formed, which can initiate transcription.

It localises to the plastid. The protein localises to the chloroplast. The enzyme catalyses RNA(n) + a ribonucleoside 5'-triphosphate = RNA(n+1) + diphosphate. DNA-dependent RNA polymerase catalyzes the transcription of DNA into RNA using the four ribonucleoside triphosphates as substrates. This chain is DNA-directed RNA polymerase subunit alpha, found in Gossypium hirsutum (Upland cotton).